The sequence spans 168 residues: Crossover junction endodeoxyribonuclease RuvC (168 aa).

Catalysis depends on residues Asp8, Glu68, and Asp140. 3 residues coordinate Mg(2+): Asp8, Glu68, and Asp140.

It belongs to the RuvC family. In terms of assembly, homodimer which binds Holliday junction (HJ) DNA. The HJ becomes 2-fold symmetrical on binding to RuvC with unstacked arms; it has a different conformation from HJ DNA in complex with RuvA. In the full resolvosome a probable DNA-RuvA(4)-RuvB(12)-RuvC(2) complex forms which resolves the HJ. The cofactor is Mg(2+).

Its subcellular location is the cytoplasm. The catalysed reaction is Endonucleolytic cleavage at a junction such as a reciprocal single-stranded crossover between two homologous DNA duplexes (Holliday junction).. Its function is as follows. The RuvA-RuvB-RuvC complex processes Holliday junction (HJ) DNA during genetic recombination and DNA repair. Endonuclease that resolves HJ intermediates. Cleaves cruciform DNA by making single-stranded nicks across the HJ at symmetrical positions within the homologous arms, yielding a 5'-phosphate and a 3'-hydroxyl group; requires a central core of homology in the junction. The consensus cleavage sequence is 5'-(A/T)TT(C/G)-3'. Cleavage occurs on the 3'-side of the TT dinucleotide at the point of strand exchange. HJ branch migration catalyzed by RuvA-RuvB allows RuvC to scan DNA until it finds its consensus sequence, where it cleaves and resolves the cruciform DNA. The chain is Crossover junction endodeoxyribonuclease RuvC from Gluconacetobacter diazotrophicus (strain ATCC 49037 / DSM 5601 / CCUG 37298 / CIP 103539 / LMG 7603 / PAl5).